The primary structure comprises 181 residues: Inner membrane-spanning protein YciB (181 aa).

The next 5 membrane-spanning stretches (helical) occupy residues 24 to 44 (SATA…WLRH), 49 to 69 (NMLW…LILQ), 81 to 101 (LYWL…KNLI), 119 to 139 (LNIS…YVAY), and 149 to 169 (FKLF…ALLL).

The protein belongs to the YciB family.

The protein resides in the cell inner membrane. Plays a role in cell envelope biogenesis, maintenance of cell envelope integrity and membrane homeostasis. The chain is Inner membrane-spanning protein YciB from Nitrosomonas eutropha (strain DSM 101675 / C91 / Nm57).